We begin with the raw amino-acid sequence, 98 residues long: MPRSLKKGPYIDIKLERRVLDMNSRGEKKVLKTWCRSSMISPDFVGHTIAVHNGKTHVPVYVSDNMVGHKLGEFAPTRTYRGHAGGKAEKGGAAPKRK.

The segment at 77 to 98 (TRTYRGHAGGKAEKGGAAPKRK) is disordered.

It belongs to the universal ribosomal protein uS19 family.

In terms of biological role, protein S19 forms a complex with S13 that binds strongly to the 16S ribosomal RNA. The chain is Small ribosomal subunit protein uS19 from Chlorobium phaeovibrioides (strain DSM 265 / 1930) (Prosthecochloris vibrioformis (strain DSM 265)).